Consider the following 31-residue polypeptide: Photosystem I reaction center subunit XII (31 aa).

The chain crosses the membrane as a helical span at residues Q7 to G26.

Belongs to the PsaM family.

It localises to the plastid. Its subcellular location is the chloroplast thylakoid membrane. The sequence is that of Photosystem I reaction center subunit XII from Euglena myxocylindracea.